The primary structure comprises 203 residues: MSRYTGPSWKQSRRLGLSLTGTGKELARRNYVPGQHGPNNRSKLSEYGLQLAEKQKLRFSYGMGEKQFRNLFVQATKIKEGTLGFNFMLLLERRLDNVVYRLGLATTRRQARQFVNHGHILVDGKRVDIPSFRVEIGQVISVREKSMKVPAILEAVEATLGRPAFVSFDAEKLEGSLTRLPERDEINPEINEALVVEFYNKML.

The S4 RNA-binding domain occupies 93-156 (RRLDNVVYRL…MKVPAILEAV (64 aa)).

It belongs to the universal ribosomal protein uS4 family. Part of the 30S ribosomal subunit. Contacts protein S5. The interaction surface between S4 and S5 is involved in control of translational fidelity.

One of the primary rRNA binding proteins, it binds directly to 16S rRNA where it nucleates assembly of the body of the 30S subunit. Its function is as follows. With S5 and S12 plays an important role in translational accuracy. The sequence is that of Small ribosomal subunit protein uS4 from Streptococcus equi subsp. equi (strain 4047).